Consider the following 25-residue polypeptide: Chrysophsin-1 (25 aa).

At histidine 25 the chain carries Histidine amide.

In terms of tissue distribution, gill. Localized in certain epithelial cells lining the surface of secondary lamellae and eosinophilic granule cell-like cells at the base of secondary lamellae.

It is found in the secreted. Its function is as follows. Has antibacterial activity against Gram-positive bacteria B.subtilis ATCC 6633, L.garvieae ATCC 49156 and S.iniae F-8502, and Gram-negative bacteria E.coli WT-2, V.anguillarum ATCC 19264, V.penaeicida KHA, V.harveyi ATCC 14126, V.vulnificus ATCC 33148, A.salmonicida NCMB 1102 and P.putida ATCC 12633. Has hemolytic activity against human red blood cells. Seems to disrupt the membranes by adopting an alpha helical conformation. May play a significant role in innate host defense. The sequence is that of Chrysophsin-1 from Pagrus major (Red sea bream).